The primary structure comprises 595 residues: Elongation factor 4 (595 aa).

One can recognise a tr-type G domain in the interval 2 to 184 (KNIRNFSIIA…QIVERIPTPK (183 aa)). Residues 14 to 19 (DHGKST) and 131 to 134 (NKID) contribute to the GTP site.

This sequence belongs to the TRAFAC class translation factor GTPase superfamily. Classic translation factor GTPase family. LepA subfamily.

The protein resides in the cell inner membrane. It catalyses the reaction GTP + H2O = GDP + phosphate + H(+). Required for accurate and efficient protein synthesis under certain stress conditions. May act as a fidelity factor of the translation reaction, by catalyzing a one-codon backward translocation of tRNAs on improperly translocated ribosomes. Back-translocation proceeds from a post-translocation (POST) complex to a pre-translocation (PRE) complex, thus giving elongation factor G a second chance to translocate the tRNAs correctly. Binds to ribosomes in a GTP-dependent manner. The polypeptide is Elongation factor 4 (Vesicomyosocius okutanii subsp. Calyptogena okutanii (strain HA)).